Reading from the N-terminus, the 219-residue chain is Transmembrane protein 247 (219 aa).

2 stretches are compositionally biased toward basic and acidic residues: residues 1–10 (MAAEDREMME) and 29–45 (SKSE…ESQK). The segment at 1–101 (MAAEDREMME…LPPTPGTERN (101 aa)) is disordered. Residues 121-156 (LHEKNQRQRQHEVVMEQLQRERQHEVVMEQLQQEAA) adopt a coiled-coil conformation. Helical transmembrane passes span 167–187 (FLLP…IHII) and 194–214 (VFFL…LCLI).

It is found in the membrane. In Homo sapiens (Human), this protein is Transmembrane protein 247 (TMEM247).